Here is a 586-residue protein sequence, read N- to C-terminus: Proton channel OTOP1 (586 aa).

Residues M1–A52 lie on the Cytoplasmic side of the membrane. The helical transmembrane segment at E53–L74 threads the bilayer. Over A75–K82 the chain is Extracellular. A helical membrane pass occupies residues E83 to I106. The Cytoplasmic segment spans residues R107–A124. The helical transmembrane segment at S125–G147 threads the bilayer. Over Y148–S157 the chain is Extracellular. Residues A158–I182 form a helical membrane-spanning segment. Topologically, residues K183–E190 are cytoplasmic. The helical transmembrane segment at T191–E217 threads the bilayer. Residues H218–S255 lie on the Extracellular side of the membrane. A helical transmembrane segment spans residues T256–K281. Residues N282–L303 are Cytoplasmic-facing. Residues L304–I326 traverse the membrane as a helical segment. Over H327–E336 the chain is Extracellular. The helical transmembrane segment at A337–L362 threads the bilayer. At V363–T380 the chain is on the cytoplasmic side. Residues L381–V405 form a helical membrane-spanning segment. Residues A406–W417 lie on the Extracellular side of the membrane. Residues T418–V438 traverse the membrane as a helical segment. The Cytoplasmic segment spans residues E439–K518. The disordered stretch occupies residues P484–R505. Residues N519 to F537 form a helical membrane-spanning segment. Topologically, residues G538–S555 are extracellular. The helical transmembrane segment at V556–L579 threads the bilayer. The Cytoplasmic segment spans residues F580–V586.

This sequence belongs to the otopetrin family. In terms of assembly, homodimer.

It localises to the cell membrane. The protein resides in the cell projection. Its subcellular location is the microvillus. The enzyme catalyses H(+)(in) = H(+)(out). With respect to regulation, activated by both acid and alkali, with proton influx in response to extracellular acid and proton efflux during alkali stimulation. Inhibited by Zn(2+); this inhibition is thought to be pH-sensitive. Currents evoked in response to mild acid (pH 6.0) stimulus may also be mildly potentiated by exposure to Zn(2+). Activated by NH(4)Cl. Its function is as follows. Proton-selective ion channel. Biphasically modulated by acid and alkali, mediating proton influx and efflux in response to extracellular acid and base stimulation, respectively. May be involved in acid and base perception. Sensor for ammonium chloride (NH(4)Cl) in taste receptor cells. NH(4)Cl acts by increasing the intracellular pH, thereby generating a driving force for proton entry through OTOP1 channel. Plays a role in the regulation of Ca(2+) flux in response to purigenic (ATP, ADP and UDP) stimuli, leading to increase in cytosolic Ca(2+) due to influx of extracellular calcium. May play this role by inhibiting P2Y purinoceptor-mediated Ca(2+) release in a Ca(2+)-dependent manner and promote an influx of Ca(2+) in response to ATP. Through this mechanism and possibly others, plays a role in the formation and function of calcium carbonate-based structures in the vestibular system of the inner ear, called otoconia, that sense gravity and linear acceleration. The sequence is that of Proton channel OTOP1 from Danio rerio (Zebrafish).